The chain runs to 281 residues: Small ribosomal subunit protein uS2 (281 aa).

Positions 229 to 281 (RSGANKTEGEAAEQPMAAWEKELLTNEAPAEASAEAAAPAAAEGETAEAPKAE) are disordered. A compositionally biased stretch (low complexity) spans 255-275 (EAPAEASAEAAAPAAAEGETA).

It belongs to the universal ribosomal protein uS2 family.

This chain is Small ribosomal subunit protein uS2, found in Bifidobacterium longum subsp. infantis (strain ATCC 15697 / DSM 20088 / JCM 1222 / NCTC 11817 / S12).